The primary structure comprises 105 residues: Large ribosomal subunit protein uL24 (105 aa).

Belongs to the universal ribosomal protein uL24 family. Part of the 50S ribosomal subunit.

In terms of biological role, one of two assembly initiator proteins, it binds directly to the 5'-end of the 23S rRNA, where it nucleates assembly of the 50S subunit. Its function is as follows. One of the proteins that surrounds the polypeptide exit tunnel on the outside of the subunit. The protein is Large ribosomal subunit protein uL24 of Staphylococcus aureus (strain Mu3 / ATCC 700698).